The chain runs to 361 residues: Peptide chain release factor 1 (361 aa).

Position 237 is an N5-methylglutamine (Q237). Basic and acidic residues predominate over residues 286 to 296; sequence EKRRSAEESTR. A disordered region spans residues 286–305; that stretch reads EKRRSAEESTRRNLVSSGDR.

This sequence belongs to the prokaryotic/mitochondrial release factor family. Methylated by PrmC. Methylation increases the termination efficiency of RF1.

The protein resides in the cytoplasm. In terms of biological role, peptide chain release factor 1 directs the termination of translation in response to the peptide chain termination codons UAG and UAA. This is Peptide chain release factor 1 from Shewanella pealeana (strain ATCC 700345 / ANG-SQ1).